The primary structure comprises 1922 residues: MKSPALQPLSMAGLQLMTPASSPMGPFFGLPWQQEAIHDNIYTPRKYQVELLEAALDHNTIVCLNTGSGKTFIAVLLTKELSYQIRGDFSRNGKRTVFLVNSANQVAQQVSAVRTHSDLKVGEYSNLEVNASWTKERWNQEFTKHQVLIMTCYVALNVLKNGYLSLSDINLLVFDECHLAILDHPYREIMKLCENCPSCPRILGLTASILNGKCDPEELEEKIQKLEKILKSNAETATDLVVLDRYTSQPCEIVVDCGPFTDRSGLYERLLMELEEALNFINDCNISVHSKERDSTLISKQILSDCRAVLVVLGPWCADKVAGMMVRELQKYIKHEQEELHRKFLLFTDTFLRKIHALCEEHFSPASLDLKFVTPKVIKLLEILRKYKPYERQQFESVEWYNNRNQDNYVSWSDSEDDDEDEEIEEKEKPETNFPSPFTNILCGIIFVERRYTAVVLNRLIKEAGKQDPELAYISSNFITGHGIGKNQPRNKQMEAEFRKQEEVLRKFRAHETNLLIATSIVEEGVDIPKCNLVVRFDLPTEYRSYVQSKGRARAPISNYIMLADTDKIKSFEEDLKTYKAIEKILRNKCSKSVDTGETDIDPVMDDDDVFPPYVLRPDDGGPRVTINTAIGHINRYCARLPSDPFTHLAPKCRTRELPDGTFYSTLYLPINSPLRASIVGPPMSCVRLAERVVALICCEKLHKIGELDDHLMPVGKETVKYEEELDLHDEEETSVPGRPGSTKRRQCYPKAIPECLRDSYPRPDQPCYLYVIGMVLTTPLPDELNFRRRKLYPPEDTTRCFGILTAKPIPQIPHFPVYTRSGEVTISIELKKSGFMLSLQMLELITRLHQYIFSHILRLEKPALEFKPTDADSAYCVLPLNVVNDSSTLDIDFKFMEDIEKSEARIGIPSTKYTKETPFVFKLEDYQDAVIIPRYRNFDQPHRFYVADVYTDLTPLSKFPSPEYETFAEYYKTKYNLDLTNLNQPLLDVDHTSSRLNLLTPRHLNQKGKALPLSSAEKRKAKWESLQNKQILVPELCAIHPIPASLWRKAVCLPSILYRLHCLLTAEELRAQTASDAGVGVRSLPADFRYPNLDFGWKKSIDSKSFISISNSSSAENDNYCKHSTIVPENAAHQGANRTSSLENHDQMSVNCRTLLSESPGKLHVEVSADLTAINGLSYNQNLANGSYDLANRDFCQGNQLNYYKQEIPVQPTTSYSIQNLYSYENQPQPSDECTLLSNKYLDGNANKSTSDGSPVMAVMPGTTDTIQVLKGRMDSEQSPSIGYSSRTLGPNPGLILQALTLSNASDGFNLERLEMLGDSFLKHAITTYLFCTYPDAHEGRLSYMRSKKVSNCNLYRLGKKKGLPSRMVVSIFDPPVNWLPPGYVVNQDKSNTDKWEKDEMTKDCMLANGKLDEDYEEEDEEEESLMWRAPKEEADYEDDFLEYDQEHIRFIDNMLMGSGAFVKKISLSPFSTTDSAYEWKMPKKSSLGSMPFSSDFEDFDYSSWDAMCYLDPSKAVEEDDFVVGFWNPSEENCGVDTGKQSISYDLHTEQCIADKSIADCVEALLGCYLTSCGERAAQLFLCSLGLKVLPVIKRTDREKALCPTRENFNSQQKNLSVSCAAASVASSRSSVLKDSEYGCLKIPPRCMFDHPDADKTLNHLISGFENFEKKINYRFKNKAYLLQAFTHASYHYNTITDCYQRLEFLGDAILDYLITKHLYEDPRQHSPGVLTDLRSALVNNTIFASLAVKYDYHKYFKAVSPELFHVIDDFVQFQLEKNEMQGMDSELRRSEEDEEKEEDIEVPKAMGDIFESLAGAIYMDSGMSLETVWQVYYPMMRPLIEKFSANVPRSPVRELLEMEPETAKFSPAERTYDGKVRVTVEVVGKGKFKGVGRSYRIAKSAAARRALRSLKANQPQVPNS.

Positions Leu-51–Glu-227 constitute a Helicase ATP-binding domain. Residue Leu-64–Thr-71 coordinates ATP. Residues Asp-175 to His-178 carry the DECH box motif. The interval Asp-256–Asp-595 is required for interaction with PRKRA and TARBP2. The interval Tyr-409–Asn-433 is disordered. Phosphoserine occurs at positions 413 and 415. A compositionally biased stretch (acidic residues) spans Asp-414–Glu-425. In terms of domain architecture, Helicase C-terminal spans Asn-433–Asp-602. Positions Ala-630–Tyr-722 constitute a Dicer dsRNA-binding fold domain. The region spanning Lys-895 to Pro-1042 is the PAZ domain. A phosphoserine mark is found at Ser-1016 and Ser-1160. The RNase III 1 domain maps to Asp-1276–Thr-1403. Glu-1316, Asp-1395, and Glu-1398 together coordinate Mg(2+). A phosphoserine mark is found at Ser-1460, Ser-1468, and Ser-1470. The 159-residue stretch at Phe-1666–Gly-1824 folds into the RNase III 2 domain. Residues Glu-1705, Asp-1810, and Glu-1813 each coordinate Mg(2+). The DRBM domain maps to Val-1849 to Ala-1914. Residue Ser-1868 is modified to Phosphoserine.

The protein belongs to the helicase family. Dicer subfamily. Component of the RISC loading complex (RLC), or micro-RNA (miRNA) loading complex (miRLC), which is composed of DICER1, AGO2 and TARBP2; DICER1 and TARBP2 are required to process precursor miRNAs (pre-miRNAs) to mature miRNAs and then load them onto AGO2. Note that the trimeric RLC/miRLC is also referred to as RISC. Interacts with DHX9, AGO1, PIWIL1 and PRKRA. Associates with the 60S ribosome. Interacts with BCDIN3D. Interacts with AGO2, TARBP2, EIF6, MOV10 and RPL7A (60S ribosome subunit); they form a large RNA-induced silencing complex (RISC). Interacts (via Dicer dsRNA-binding fold domain) with ALOX5 (via PLAT domain); this interaction enhances arachidonate 5-lipoxygenase activity and modifies the miRNA precursor processing activity of DICER1. In terms of assembly, (Microbial infection) Interacts with ebolavirus transcriptional activator VP30; this interaction prevents TARBP2/TRBP binding to DICER1 and thus allows the virus to counteract host RNA silencing. As to quaternary structure, (Microbial infection) Interacts with ebolavirus transcriptional activator VP35; this interaction prevents TARBP2/TRBP binding to DICER1 and thus allows the virus to counteract host RNA silencing. Mg(2+) is required as a cofactor. Requires Mn(2+) as cofactor.

The protein localises to the cytoplasm. It is found in the perinuclear region. It carries out the reaction Endonucleolytic cleavage to 5'-phosphomonoester.. Its function is as follows. Double-stranded RNA (dsRNA) endoribonuclease playing a central role in short dsRNA-mediated post-transcriptional gene silencing. Cleaves naturally occurring long dsRNAs and short hairpin pre-microRNAs (miRNA) into fragments of twenty-one to twenty-three nucleotides with 3' overhang of two nucleotides, producing respectively short interfering RNAs (siRNA) and mature microRNAs. SiRNAs and miRNAs serve as guide to direct the RNA-induced silencing complex (RISC) to complementary RNAs to degrade them or prevent their translation. Gene silencing mediated by siRNAs, also called RNA interference, controls the elimination of transcripts from mobile and repetitive DNA elements of the genome but also the degradation of exogenous RNA of viral origin for instance. The miRNA pathway on the other side is a mean to specifically regulate the expression of target genes. The sequence is that of Endoribonuclease Dicer (DICER1) from Homo sapiens (Human).